A 418-amino-acid polypeptide reads, in one-letter code: Putative ion-transport protein YfeO (418 aa).

12 helical membrane-spanning segments follow: residues 10–30 (LLLSLPAVAIGIASSLILIVV), 54–74 (DSPLWIIGVLTLTGIAVGLVI), 99–119 (ALPGLIVALILGLAGGVSLGP), 120–140 (EHPIMTINIALAVAIGARLLP), 149–169 (ILASAGTIGALFGTPVAAALI), 186–206 (LFAPLMAAAAGALTTGLFFHP), 223–243 (ILSGAIVAAIAIAAGMVAVWC), 258–278 (VLVLGIGGFILGILGVIGGPV), 300–320 (DYFLLAVIKLAALVVAAASGF), 322–342 (GGRIFPAVFVGVALGLMLHEH), 343–363 (VPAVPAAITVSCAILGIVLVV), and 371–391 (LFMAAVVVPNTTLLPLLCIVM).

It belongs to the chloride channel (TC 2.A.49) family.

It localises to the cell membrane. The polypeptide is Putative ion-transport protein YfeO (Shigella boydii serotype 4 (strain Sb227)).